The primary structure comprises 343 residues: Anthranilate 1,2-dioxygenase electron transfer component (343 aa).

Positions 3–96 constitute a 2Fe-2S ferredoxin-type domain; sequence HSVALNFADG…NAAFYFDHHS (94 aa). The [2Fe-2S] cluster site is built by Cys40, Cys45, Cys48, and Cys80. Positions 98-338 are ferredoxin-reductase; the sequence is ICNAGETLKI…HIYSEKFLQS (241 aa). The 104-residue stretch at 103 to 206 folds into the FAD-binding FR-type domain; sequence ETLKIATVVT…EAPLGSFYLR (104 aa).

This sequence belongs to the bacterial ring-hydroxylating dioxygenase ferredoxin reductase family. In terms of assembly, monomer. It is part of the anthranilate dioxygenase two component enzyme system. The other component is an oxygenase component consisting of 3 large (AntA) and 3 small (AntB) subunits. FAD serves as cofactor. The cofactor is [2Fe-2S] cluster.

The enzyme catalyses 2 reduced [2Fe-2S]-[ferredoxin] + NAD(+) + H(+) = 2 oxidized [2Fe-2S]-[ferredoxin] + NADH. The protein operates within aromatic compound metabolism; anthranilate degradation via hydroxylation; catechol from anthranilate: step 1/1. Functionally, electron transfer component of anthranilate 1,2-dioxygenase system. The sequence is that of Anthranilate 1,2-dioxygenase electron transfer component from Acinetobacter baylyi (strain ATCC 33305 / BD413 / ADP1).